Reading from the N-terminus, the 150-residue chain is Interferon antagonist OPG027 (150 aa).

Belongs to the orthopoxvirus OPG027 family.

Inhibits antiviral activity induced by type I interferons. Does not block signal transduction of IFN, but is important to counteract the host antiviral state induced by a pre-treatment with IFN. The sequence is that of Interferon antagonist OPG027 (OPG027) from Cynomys gunnisoni (Gunnison's prairie dog).